A 127-amino-acid polypeptide reads, in one-letter code: PRA1 family protein C (127 aa).

Transmembrane regions (helical) follow at residues I15 to A35, V53 to L73, and V76 to M96.

This sequence belongs to the PRA1 family.

It localises to the endoplasmic reticulum membrane. In terms of biological role, may be involved in both secretory and endocytic intracellular trafficking in the endosomal/prevacuolar compartments. The protein is PRA1 family protein C (PRA1C) of Arabidopsis thaliana (Mouse-ear cress).